The sequence spans 421 residues: Magnesium transporter MRS2-5 (421 aa).

2 helical membrane-spanning segments follow: residues 357 to 377 and 393 to 413; these read LLLTAATFVAAIFAAVTAVFG and YVLLITGIGCGFLYFGFVLYF. The Required for magnesium transport activity signature appears at 377 to 379; sequence GMN.

The protein belongs to the CorA metal ion transporter (MIT) (TC 1.A.35.5) family. Expressed in the whole plant.

It is found in the membrane. Magnesium transporter that may mediate the influx of magnesium. The chain is Magnesium transporter MRS2-5 (MRS2-5) from Arabidopsis thaliana (Mouse-ear cress).